Reading from the N-terminus, the 321-residue chain is MSMFLKKQKKTKGGSSEEKRRGRTGSPPRMTSDPGAPRLKRATYFQFPKDGIKETMRKTKDAGDLDDVFFEDCTQCNPPSHVPVFSKPKPRTRAGGAADDSDSESSEDGGEDDEETLHSQDTPPGGSSSDSDDDDQKLPFTATGGIKMPGYMSRISDSSSSSSSSSDSESSSSSDSESDGDRSTPEPDILRQVTSSLARGVSPPRAKPPPAKGEVPVISLLSSEESDSEGEPSPLRAAAAAASQKRKHTSSSSDNDPKHTKVIYISSGESEDEGEGAGAGEGEPLGPEDQVLVVMSQESCEHYMATTPPVAGNPPYNWPWL.

The segment covering methionine 1–lysine 12 has biased composition (basic residues). Disordered regions lie at residues methionine 1–threonine 59 and glutamate 71–aspartate 289. Basic and acidic residues predominate over residues aspartate 50–threonine 59. The segment covering aspartate 99–glutamate 115 has biased composition (acidic residues). Residues serine 156 to aspartate 175 show a composition bias toward low complexity. A compositionally biased stretch (basic and acidic residues) spans aspartate 179–isoleucine 189. Over residues glutamate 231 to alanine 242 the composition is skewed to low complexity.

This is an uncharacterized protein from Equus caballus (Horse).